The sequence spans 84 residues: Large ribosomal subunit protein bL27 (84 aa).

The interval 1-21 is disordered; that stretch reads MAHKKGASSTRNGRDSNAQRL. Positions 7-19 are enriched in polar residues; sequence ASSTRNGRDSNAQ.

It belongs to the bacterial ribosomal protein bL27 family.

This chain is Large ribosomal subunit protein bL27, found in Clavibacter sepedonicus (Clavibacter michiganensis subsp. sepedonicus).